Consider the following 546-residue polypeptide: CTP synthase (546 aa).

An amidoligase domain region spans residues 1–269 (MNSNTKIIFV…DAKLVELLNL (269 aa)). Serine 16 lines the CTP pocket. Serine 16 contributes to the UTP binding site. Residues 17–22 (SLGKGV) and aspartate 74 each bind ATP. Positions 74 and 143 each coordinate Mg(2+). CTP is bound by residues 150-152 (DIE), 190-195 (KTKPTQ), and lysine 226. Residues 190–195 (KTKPTQ) and lysine 226 each bind UTP. A Glutamine amidotransferase type-1 domain is found at 294–546 (IIAMVGKYVS…IQAAIENSNN (253 aa)). Residue glycine 356 coordinates L-glutamine. Cysteine 383 (nucleophile; for glutamine hydrolysis) is an active-site residue. L-glutamine is bound by residues 384–387 (LGMQ), glutamate 407, and arginine 474. Catalysis depends on residues histidine 519 and glutamate 521.

The protein belongs to the CTP synthase family. As to quaternary structure, homotetramer.

It carries out the reaction UTP + L-glutamine + ATP + H2O = CTP + L-glutamate + ADP + phosphate + 2 H(+). It catalyses the reaction L-glutamine + H2O = L-glutamate + NH4(+). The catalysed reaction is UTP + NH4(+) + ATP = CTP + ADP + phosphate + 2 H(+). It participates in pyrimidine metabolism; CTP biosynthesis via de novo pathway; CTP from UDP: step 2/2. Its activity is regulated as follows. Allosterically activated by GTP, when glutamine is the substrate; GTP has no effect on the reaction when ammonia is the substrate. The allosteric effector GTP functions by stabilizing the protein conformation that binds the tetrahedral intermediate(s) formed during glutamine hydrolysis. Inhibited by the product CTP, via allosteric rather than competitive inhibition. Its function is as follows. Catalyzes the ATP-dependent amination of UTP to CTP with either L-glutamine or ammonia as the source of nitrogen. Regulates intracellular CTP levels through interactions with the four ribonucleotide triphosphates. The polypeptide is CTP synthase (Francisella tularensis subsp. holarctica (strain FTNF002-00 / FTA)).